A 422-amino-acid polypeptide reads, in one-letter code: Glutamate-1-semialdehyde 2,1-aminomutase (422 aa).

Lys-264 bears the N6-(pyridoxal phosphate)lysine mark.

The protein belongs to the class-III pyridoxal-phosphate-dependent aminotransferase family. HemL subfamily. As to quaternary structure, homodimer. Pyridoxal 5'-phosphate serves as cofactor.

It localises to the cytoplasm. The enzyme catalyses (S)-4-amino-5-oxopentanoate = 5-aminolevulinate. Its pathway is porphyrin-containing compound metabolism; protoporphyrin-IX biosynthesis; 5-aminolevulinate from L-glutamyl-tRNA(Glu): step 2/2. In Clostridium tetani (strain Massachusetts / E88), this protein is Glutamate-1-semialdehyde 2,1-aminomutase.